Consider the following 74-residue polypeptide: Sodium channel neurotoxin MeuNaTxalpha-11 (74 aa).

An N-terminal signal peptide occupies residues 1–7 (LMTGVES). Positions 9 to 73 (RDAYIAKPHN…VPIRIPGKCH (65 aa)) constitute an LCN-type CS-alpha/beta domain. 4 disulfide bridges follow: C19–C72, C23–C45, C31–C55, and C35–C57. R74 is a propeptide (removed by a carboxypeptidase).

Belongs to the long (4 C-C) scorpion toxin superfamily. Sodium channel inhibitor family. Alpha subfamily. As to expression, expressed by the venom gland.

The protein resides in the secreted. In terms of biological role, alpha toxins bind voltage-independently at site-3 of sodium channels (Nav) and inhibit the inactivation of the activated channels, thereby blocking neuronal transmission. In Mesobuthus eupeus (Lesser Asian scorpion), this protein is Sodium channel neurotoxin MeuNaTxalpha-11.